We begin with the raw amino-acid sequence, 251 residues long: CDP-diacylglycerol pyrophosphatase (251 aa).

A helical transmembrane segment spans residues 4–24 (AGLLFLVMIVIAVVASGIGYW).

The protein belongs to the Cdh family.

It localises to the cell inner membrane. The enzyme catalyses a CDP-1,2-diacyl-sn-glycerol + H2O = a 1,2-diacyl-sn-glycero-3-phosphate + CMP + 2 H(+). The protein operates within phospholipid metabolism; CDP-diacylglycerol degradation; phosphatidate from CDP-diacylglycerol: step 1/1. This Escherichia coli O8 (strain IAI1) protein is CDP-diacylglycerol pyrophosphatase.